Consider the following 444-residue polypeptide: Tryptophan 5-hydroxylase 1 (444 aa).

The ACT domain maps to 19–94 (TLIFSLKNEV…NVLSVTPPDN (76 aa)). Ser58 is subject to Phosphoserine; by PKA. The L-tryptophan site is built by Tyr235, Arg257, and Thr265. His272, His277, and Glu317 together coordinate Fe cation. The L-tryptophan site is built by Ser336 and Ile366.

This sequence belongs to the biopterin-dependent aromatic amino acid hydroxylase family. As to quaternary structure, homotetramer. Interacts with DNAJC12. Fe(2+) is required as a cofactor. Ubiquitinated, leading to its degradation by the proteasome. Ubiquitinated is triggered by phosphorylation. In terms of processing, phosphorylated; triggering degradation by the proteasome.

The enzyme catalyses (6R)-L-erythro-5,6,7,8-tetrahydrobiopterin + L-tryptophan + O2 = 5-hydroxy-L-tryptophan + (4aS,6R)-4a-hydroxy-L-erythro-5,6,7,8-tetrahydrobiopterin. It participates in aromatic compound metabolism; serotonin biosynthesis; serotonin from L-tryptophan: step 1/2. In terms of biological role, oxidizes L-tryptophan to 5-hydroxy-l-tryptophan in the rate-determining step of serotonin biosynthesis. The chain is Tryptophan 5-hydroxylase 1 (TPH1) from Oryctolagus cuniculus (Rabbit).